Consider the following 256-residue polypeptide: Ubiquinone/menaquinone biosynthesis C-methyltransferase UbiE (256 aa).

Basic and acidic residues predominate over residues 1-12 (MNDQRKGDHAEP). Residues 1 to 23 (MNDQRKGDHAEPTTHFGYQDVPE) form a disordered region. Residues Thr-79, Asp-100, and 128–129 (DA) each bind S-adenosyl-L-methionine.

The protein belongs to the class I-like SAM-binding methyltransferase superfamily. MenG/UbiE family.

It carries out the reaction a 2-demethylmenaquinol + S-adenosyl-L-methionine = a menaquinol + S-adenosyl-L-homocysteine + H(+). It catalyses the reaction a 2-methoxy-6-(all-trans-polyprenyl)benzene-1,4-diol + S-adenosyl-L-methionine = a 5-methoxy-2-methyl-3-(all-trans-polyprenyl)benzene-1,4-diol + S-adenosyl-L-homocysteine + H(+). Its pathway is quinol/quinone metabolism; menaquinone biosynthesis; menaquinol from 1,4-dihydroxy-2-naphthoate: step 2/2. It functions in the pathway cofactor biosynthesis; ubiquinone biosynthesis. In terms of biological role, methyltransferase required for the conversion of demethylmenaquinol (DMKH2) to menaquinol (MKH2) and the conversion of 2-polyprenyl-6-methoxy-1,4-benzoquinol (DDMQH2) to 2-polyprenyl-3-methyl-6-methoxy-1,4-benzoquinol (DMQH2). In Pseudomonas putida (strain GB-1), this protein is Ubiquinone/menaquinone biosynthesis C-methyltransferase UbiE.